The following is a 395-amino-acid chain: ATP-dependent RNA helicase eIF4A (395 aa).

Ser-2 carries the post-translational modification N-acetylserine. The Q motif signature appears at 22 to 50 (YKFDDMELDENLLRGVFGYGFEEPSAIQQ). A Helicase ATP-binding domain is found at 53-222 (IMPIIEGHDV…TKFMRNPVRI (170 aa)). ATP is bound at residue 66–73 (AQSGTGKT). A Phosphothreonine modification is found at Thr-73. Ser-77 and Ser-129 each carry phosphoserine. At Thr-146 the chain carries Phosphothreonine. A DEAD box motif is present at residues 170-173 (DEAD). The Helicase C-terminal domain occupies 233–394 (GIKQFYVNVE…ELPSDIATLL (162 aa)).

Belongs to the DEAD box helicase family. eIF4A subfamily. In terms of assembly, component of the eIF4F complex, which composition varies with external and internal environmental conditions. It is composed of at least eIF4A, eIF4E and eIF4G.

The protein localises to the cytoplasm. It catalyses the reaction ATP + H2O = ADP + phosphate + H(+). Functionally, ATP-dependent RNA helicase which is a subunit of the eIF4F complex involved in cap recognition and is required for mRNA binding to ribosome. In the current model of translation initiation, eIF4A unwinds RNA secondary structures in the 5'-UTR of mRNAs which is necessary to allow efficient binding of the small ribosomal subunit, and subsequent scanning for the initiator codon. This chain is ATP-dependent RNA helicase eIF4A (TIF1), found in Saccharomyces cerevisiae (strain YJM789) (Baker's yeast).